Consider the following 338-residue polypeptide: Tagatose 1,6-diphosphate aldolase (338 aa).

Belongs to the aldolase LacD family.

It catalyses the reaction D-tagatofuranose 1,6-bisphosphate = D-glyceraldehyde 3-phosphate + dihydroxyacetone phosphate. The protein operates within carbohydrate metabolism; D-tagatose 6-phosphate degradation; D-glyceraldehyde 3-phosphate and glycerone phosphate from D-tagatose 6-phosphate: step 2/2. In Listeria innocua serovar 6a (strain ATCC BAA-680 / CLIP 11262), this protein is Tagatose 1,6-diphosphate aldolase.